The primary structure comprises 337 residues: uncharacterized protein (337 aa).

The next 2 helical transmembrane spans lie at 4–24 and 26–46; these read FIFFFKNYCYISGSMLLFSLI and LLLWIISLYCVGLVFWILFAL.

The protein belongs to the plectrovirus ORF2 family.

Its subcellular location is the host membrane. This is an uncharacterized protein from Spiroplasma melliferum (SpV1).